A 120-amino-acid polypeptide reads, in one-letter code: UPF0231 protein YacL (120 aa).

The protein belongs to the UPF0231 family.

This is UPF0231 protein YacL from Escherichia coli O6:K15:H31 (strain 536 / UPEC).